Here is a 61-residue protein sequence, read N- to C-terminus: Large ribosomal subunit protein bL28 (61 aa).

This sequence belongs to the bacterial ribosomal protein bL28 family.

This Lactobacillus gasseri (strain ATCC 33323 / DSM 20243 / BCRC 14619 / CIP 102991 / JCM 1131 / KCTC 3163 / NCIMB 11718 / NCTC 13722 / AM63) protein is Large ribosomal subunit protein bL28.